The chain runs to 132 residues: Probable histone H2A.1 (132 aa).

Residues 1–22 (MAGRGKTLGSGSAKKATTRSSK) are disordered.

This sequence belongs to the histone H2A family. As to quaternary structure, the nucleosome is a histone octamer containing two molecules each of H2A, H2B, H3 and H4 assembled in one H3-H4 heterotetramer and two H2A-H2B heterodimers. The octamer wraps approximately 147 bp of DNA. Not ubiquitinated. In terms of tissue distribution, low level of expression; mainly in roots. Found in the root cap cells and in non dividing tissues of the plant, including the root elongation and maturation zones and the leaf veins.

It localises to the nucleus. The protein resides in the chromosome. In terms of biological role, core component of nucleosome. Nucleosomes wrap and compact DNA into chromatin, limiting DNA accessibility to the cellular machineries which require DNA as a template. Histones thereby play a central role in transcription regulation, DNA repair, DNA replication and chromosomal stability. DNA accessibility is regulated via a complex set of post-translational modifications of histones, also called histone code, and nucleosome remodeling. This chain is Probable histone H2A.1, found in Arabidopsis thaliana (Mouse-ear cress).